Reading from the N-terminus, the 474-residue chain is Probable threonine--tRNA ligase, mitochondrial (474 aa).

The transit peptide at 1-27 (MMKLKKFQLHTPFAHSCNRVEIYTARF) directs the protein to the mitochondrion.

This sequence belongs to the class-II aminoacyl-tRNA synthetase family.

It is found in the mitochondrion matrix. The enzyme catalyses tRNA(Thr) + L-threonine + ATP = L-threonyl-tRNA(Thr) + AMP + diphosphate + H(+). The chain is Probable threonine--tRNA ligase, mitochondrial from Schizosaccharomyces pombe (strain 972 / ATCC 24843) (Fission yeast).